Consider the following 243-residue polypeptide: 1-(5-phosphoribosyl)-5-[(5-phosphoribosylamino)methylideneamino] imidazole-4-carboxamide isomerase (243 aa).

D9 serves as the catalytic Proton acceptor. Residue D131 is the Proton donor of the active site.

The protein belongs to the HisA/HisF family.

It localises to the cytoplasm. It catalyses the reaction 1-(5-phospho-beta-D-ribosyl)-5-[(5-phospho-beta-D-ribosylamino)methylideneamino]imidazole-4-carboxamide = 5-[(5-phospho-1-deoxy-D-ribulos-1-ylimino)methylamino]-1-(5-phospho-beta-D-ribosyl)imidazole-4-carboxamide. It participates in amino-acid biosynthesis; L-histidine biosynthesis; L-histidine from 5-phospho-alpha-D-ribose 1-diphosphate: step 4/9. This chain is 1-(5-phosphoribosyl)-5-[(5-phosphoribosylamino)methylideneamino] imidazole-4-carboxamide isomerase, found in Campylobacter jejuni (strain RM1221).